A 477-amino-acid polypeptide reads, in one-letter code: Endoglucanase A (477 aa).

Residues 1–32 (MKNVKKRVGVVLLILAVLGVYMLAMPANTVSA) form the signal peptide. E95 acts as the Proton donor in catalysis. The active-site Nucleophile is the D152. One can recognise a Dockerin domain in the interval 411-477 (PQVVYGDVNG…LIKSIPHLPY (67 aa)).

It belongs to the glycosyl hydrolase 8 (cellulase D) family.

The catalysed reaction is Endohydrolysis of (1-&gt;4)-beta-D-glucosidic linkages in cellulose, lichenin and cereal beta-D-glucans.. Its function is as follows. This enzyme catalyzes the endohydrolysis of 1,4-beta-glucosidic linkages in cellulose, lichenin and cereal beta-D-glucans. This Acetivibrio thermocellus (strain ATCC 27405 / DSM 1237 / JCM 9322 / NBRC 103400 / NCIMB 10682 / NRRL B-4536 / VPI 7372) (Clostridium thermocellum) protein is Endoglucanase A (celA).